A 481-amino-acid polypeptide reads, in one-letter code: Glutamate-1-semialdehyde 2,1-aminomutase, chloroplastic (481 aa).

The tract at residues 18–40 (NQTPKWGFSPSHRRCNPSSSSSA) is disordered. Residue Lys321 is modified to N6-(pyridoxal phosphate)lysine.

This sequence belongs to the class-III pyridoxal-phosphate-dependent aminotransferase family. HemL subfamily. In terms of assembly, homodimer. It depends on pyridoxal 5'-phosphate as a cofactor.

It localises to the plastid. The protein resides in the chloroplast. It carries out the reaction (S)-4-amino-5-oxopentanoate = 5-aminolevulinate. Its pathway is porphyrin-containing compound metabolism; protoporphyrin-IX biosynthesis; 5-aminolevulinate from L-glutamyl-tRNA(Glu): step 2/2. It participates in porphyrin-containing compound metabolism; chlorophyll biosynthesis. In Solanum lycopersicum (Tomato), this protein is Glutamate-1-semialdehyde 2,1-aminomutase, chloroplastic.